The sequence spans 418 residues: Tyrosine--tRNA ligase (418 aa).

Tyrosine 39 contacts L-tyrosine. The 'HIGH' region motif lies at 44–53 (CTAASLHVGH). The L-tyrosine site is built by tyrosine 176 and glutamine 180. The 'KMSKS' region motif lies at 236-240 (KMGKT). Lysine 239 is an ATP binding site. Residues 350–418 (IGVLVAFAEK…KKKHVLLRLA (69 aa)) form the S4 RNA-binding domain.

It belongs to the class-I aminoacyl-tRNA synthetase family. TyrS type 1 subfamily. Homodimer.

The protein localises to the cytoplasm. It carries out the reaction tRNA(Tyr) + L-tyrosine + ATP = L-tyrosyl-tRNA(Tyr) + AMP + diphosphate + H(+). In terms of biological role, catalyzes the attachment of tyrosine to tRNA(Tyr) in a two-step reaction: tyrosine is first activated by ATP to form Tyr-AMP and then transferred to the acceptor end of tRNA(Tyr). In Rhodopseudomonas palustris (strain ATCC BAA-98 / CGA009), this protein is Tyrosine--tRNA ligase.